A 4146-amino-acid polypeptide reads, in one-letter code: DNA-dependent protein kinase catalytic subunit (4146 aa).

4 HEAT repeats span residues Asp-308–Ile-343, Val-925–Met-962, Gln-1026–Ser-1062, and Pro-1075–Phe-1111. 2 TPR repeats span residues Pro-1745 to Pro-1778 and Val-1974 to Tyr-2007. A Phosphoserine; by autocatalysis modification is found at Ser-2075. Thr-2631 is modified (phosphothreonine; by autocatalysis). Ser-2634 is subject to Phosphoserine; by autocatalysis. 2 positions are modified to phosphothreonine; by autocatalysis: Thr-2659 and Thr-2668. Residues Phe-2873–Ser-3556 form the FAT domain. Residues Phe-3739–Gly-4071 form the PI3K/PI4K catalytic domain. A G-loop region spans residues Val-3745–Lys-3751. A catalytic loop region spans residues Gly-3937 to Asn-3945. Residues Gly-3957 to Thr-3982 form an activation loop region. Positions Asp-4114–Ile-4146 constitute an FATC domain.

The protein belongs to the PI3/PI4-kinase family. DNA-PK is a heterotrimer of prkdc and the Ku dimer (composed of xrcc6/Ku70 and xrcc5/Ku86). Component of the core long-range non-homologous end joining (NHEJ) complex (also named DNA-PK complex) composed of prkdc, lig4, xrcc4, xrcc6/ku70, xrcc5/ku86 and nhej1/xlf. Additional component of the NHEJ complex includes paxx. Following autophosphorylation, prkdc dissociates from DNA. In terms of processing, autophosphorylated at two clusters, the T2609 cluster and the S2056 cluster. Autophosphorylated on Ser-2075, Thr-2631, Thr-2659 and Thr-2668. Ser-2075 and Thr-2668 are DNA damage-inducible phosphorylation sites (inducible with ionizing radiation, IR) dephosphorylated by PPP5C. Autophosphorylation induces a conformational change that leads to remodeling of the DNA-PK complex, requisite for efficient end processing and DNA repair. Autophosphorylation in trans within DNA-PK complexes loaded on DNA ends leads to the dissociation of PRKDC from DNA and the transition into the short-range NHEJ complex. Autophosphorylation of the T2609 cluster is required for hematopoietic development and protein synthesis in erythrocytes precursors.

The protein localises to the nucleus. It is found in the nucleolus. The enzyme catalyses L-seryl-[protein] + ATP = O-phospho-L-seryl-[protein] + ADP + H(+). It carries out the reaction L-threonyl-[protein] + ATP = O-phospho-L-threonyl-[protein] + ADP + H(+). In terms of biological role, serine/threonine-protein kinase that acts as a molecular sensor for DNA damage. Involved in DNA nonhomologous end joining (NHEJ) required for double-strand break (DSB) repair and V(D)J recombination. Must be bound to DNA to express its catalytic properties. Promotes processing of hairpin DNA structures in V(D)J recombination by activation of the hairpin endonuclease artemis (DCLRE1C). Recruited by XRCC5 and XRCC6 to DNA ends and is required to (1) protect and align broken ends of DNA, thereby preventing their degradation, (2) and sequester the DSB for repair by NHEJ. Acts as a scaffold protein to aid the localization of DNA repair proteins to the site of damage. The assembly of the DNA-PK complex at DNA ends is also required for the NHEJ ligation step. Found at the ends of chromosomes, suggesting a further role in the maintenance of telomeric stability and the prevention of chromosomal end fusion. As part of the DNA-PK complex, involved in the early steps of ribosome assembly by promoting the processing of precursor rRNA into mature 18S rRNA in the small-subunit processome. Recognizes the substrate consensus sequence [ST]-Q. Phosphorylates 'Ser-139' of histone variant H2AX, thereby regulating DNA damage response mechanism. This Xenopus laevis (African clawed frog) protein is DNA-dependent protein kinase catalytic subunit (prkdc).